We begin with the raw amino-acid sequence, 801 residues long: Growth-differentiation transition protein 7 (801 aa).

The first 22 residues, 1–22 (MIKTILIKLILLVIFCYHFLFA), serve as a signal peptide directing secretion.

The protein belongs to the GDT family.

It localises to the secreted. The sequence is that of Growth-differentiation transition protein 7 (gdt7) from Dictyostelium discoideum (Social amoeba).